The chain runs to 162 residues: Ribosome maturation factor RimM (162 aa).

In terms of domain architecture, PRC barrel spans 90-161 (EDCYYEADIV…KIIIKPLEVW (72 aa)).

This sequence belongs to the RimM family. As to quaternary structure, binds ribosomal protein uS19.

Its subcellular location is the cytoplasm. Functionally, an accessory protein needed during the final step in the assembly of 30S ribosomal subunit, possibly for assembly of the head region. Essential for efficient processing of 16S rRNA. May be needed both before and after RbfA during the maturation of 16S rRNA. It has affinity for free ribosomal 30S subunits but not for 70S ribosomes. This Clostridium novyi (strain NT) protein is Ribosome maturation factor RimM.